The primary structure comprises 401 residues: Chalcone synthase 5 (401 aa).

Cys-168 is an active-site residue.

This sequence belongs to the thiolase-like superfamily. Chalcone/stilbene synthases family.

It catalyses the reaction (E)-4-coumaroyl-CoA + 3 malonyl-CoA + 3 H(+) = 2',4,4',6'-tetrahydroxychalcone + 3 CO2 + 4 CoA. Its pathway is secondary metabolite biosynthesis; flavonoid biosynthesis. Functionally, the primary product of this enzyme is 4,2',4',6'-tetrahydroxychalcone (also termed naringenin-chalcone or chalcone) which can under specific conditions spontaneously isomerize into naringenin. The protein is Chalcone synthase 5 (CHS5) of Sorghum bicolor (Sorghum).